Consider the following 202-residue polypeptide: ATP-dependent Clp protease proteolytic subunit (202 aa).

The active-site Nucleophile is serine 101. The active site involves histidine 126.

It belongs to the peptidase S14 family. Component of the chloroplastic Clp protease core complex.

It localises to the plastid. It is found in the chloroplast stroma. It catalyses the reaction Hydrolysis of proteins to small peptides in the presence of ATP and magnesium. alpha-casein is the usual test substrate. In the absence of ATP, only oligopeptides shorter than five residues are hydrolyzed (such as succinyl-Leu-Tyr-|-NHMec, and Leu-Tyr-Leu-|-Tyr-Trp, in which cleavage of the -Tyr-|-Leu- and -Tyr-|-Trp bonds also occurs).. In terms of biological role, cleaves peptides in various proteins in a process that requires ATP hydrolysis. Has a chymotrypsin-like activity. Plays a major role in the degradation of misfolded proteins. The sequence is that of ATP-dependent Clp protease proteolytic subunit from Illicium oligandrum (Star anise).